The chain runs to 99 residues: Malonate decarboxylase acyl carrier protein (99 aa).

At serine 25 the chain carries O-(phosphoribosyl dephospho-coenzyme A)serine.

This sequence belongs to the MdcC family. Post-translationally, covalently binds the prosthetic group of malonate decarboxylase.

It is found in the cytoplasm. Its function is as follows. Subunit of malonate decarboxylase, it is an acyl carrier protein to which acetyl and malonyl thioester residues are bound via a 2'-(5''-phosphoribosyl)-3'-dephospho-CoA prosthetic group and turn over during the catalytic mechanism. The chain is Malonate decarboxylase acyl carrier protein from Pseudomonas syringae pv. syringae (strain B728a).